Here is a 469-residue protein sequence, read N- to C-terminus: 3-isopropylmalate dehydratase large subunit (469 aa).

Residues C347, C410, and C413 each contribute to the [4Fe-4S] cluster site.

Belongs to the aconitase/IPM isomerase family. LeuC type 1 subfamily. In terms of assembly, heterodimer of LeuC and LeuD. Requires [4Fe-4S] cluster as cofactor.

It catalyses the reaction (2R,3S)-3-isopropylmalate = (2S)-2-isopropylmalate. It participates in amino-acid biosynthesis; L-leucine biosynthesis; L-leucine from 3-methyl-2-oxobutanoate: step 2/4. Catalyzes the isomerization between 2-isopropylmalate and 3-isopropylmalate, via the formation of 2-isopropylmaleate. The sequence is that of 3-isopropylmalate dehydratase large subunit from Burkholderia vietnamiensis (strain G4 / LMG 22486) (Burkholderia cepacia (strain R1808)).